The chain runs to 503 residues: Cobyric acid synthase (503 aa).

In terms of domain architecture, GATase cobBQ-type spans 251–450 (DLDIAVIRLP…IHGIFENAAF (200 aa)). The active-site Nucleophile is cysteine 331. Histidine 442 is an active-site residue.

The protein belongs to the CobB/CobQ family. CobQ subfamily.

The protein operates within cofactor biosynthesis; adenosylcobalamin biosynthesis. Catalyzes amidations at positions B, D, E, and G on adenosylcobyrinic A,C-diamide. NH(2) groups are provided by glutamine, and one molecule of ATP is hydrogenolyzed for each amidation. This chain is Cobyric acid synthase, found in Dehalococcoides mccartyi (strain CBDB1).